We begin with the raw amino-acid sequence, 435 residues long: Putative dimethyl sulfoxide reductase membrane subunit C (435 aa).

11 helical membrane-spanning segments follow: residues 22–42 (GWLGVLALLLVIGLGAWAYQL), 57–77 (WGLYIMLFVLFVGLSAGGLIL), 95–115 (LGVLVSLGCIIVAGLLILPDI), 135–155 (VWDFGIVMLYGALNVWYLWLL), 186–206 (FWTAVCALPAAVALHSVTGWI), 220–240 (LVAPVFIAKALVSGLGLLLVV), 257–277 (LTSLGKLLGIFLAFHVVYLLA), 281–301 (LPHAWAHHFGFWAITSNFLIG), 304–324 (VYFWLWTGLGGAVPLLLLATP), 333–353 (IFTASVLAVFGTLFEGIRLVF), and 392–412 (VEIAVTVGVISIGALIVMAGL).

Belongs to the NrfD family. In terms of assembly, probable multiprotein complex that likely consists of DmsA, DmsB and DmsC.

It localises to the cell membrane. In terms of biological role, dimethyl sulfoxide (DMSO) reductase catalyzes the reduction of dimethyl sulfoxide (DMSO) to dimethyl sulfide (DMS) during anaerobic respiration; it can also use trimethylamine N-oxide (TMAO) as terminal electron acceptor. Subunit C is proposed to be a membrane anchoring subunit. This Halobacterium salinarum (strain ATCC 700922 / JCM 11081 / NRC-1) (Halobacterium halobium) protein is Putative dimethyl sulfoxide reductase membrane subunit C (dmsC).